Here is a 382-residue protein sequence, read N- to C-terminus: Dual-specificity RNA methyltransferase RlmN (382 aa).

Catalysis depends on E95, which acts as the Proton acceptor. The region spanning 101–349 (EETRGTLCVS…TTVRKTRGDD (249 aa)) is the Radical SAM core domain. A disulfide bond links C108 and C354. [4Fe-4S] cluster contacts are provided by C115, C119, and C122. S-adenosyl-L-methionine is bound by residues 180–181 (GE), S212, 234–236 (SLH), and N311. C354 (S-methylcysteine intermediate) is an active-site residue.

The protein belongs to the radical SAM superfamily. RlmN family. [4Fe-4S] cluster serves as cofactor.

It is found in the cytoplasm. It catalyses the reaction adenosine(2503) in 23S rRNA + 2 reduced [2Fe-2S]-[ferredoxin] + 2 S-adenosyl-L-methionine = 2-methyladenosine(2503) in 23S rRNA + 5'-deoxyadenosine + L-methionine + 2 oxidized [2Fe-2S]-[ferredoxin] + S-adenosyl-L-homocysteine. It carries out the reaction adenosine(37) in tRNA + 2 reduced [2Fe-2S]-[ferredoxin] + 2 S-adenosyl-L-methionine = 2-methyladenosine(37) in tRNA + 5'-deoxyadenosine + L-methionine + 2 oxidized [2Fe-2S]-[ferredoxin] + S-adenosyl-L-homocysteine. In terms of biological role, specifically methylates position 2 of adenine 2503 in 23S rRNA and position 2 of adenine 37 in tRNAs. m2A2503 modification seems to play a crucial role in the proofreading step occurring at the peptidyl transferase center and thus would serve to optimize ribosomal fidelity. In Paraburkholderia phymatum (strain DSM 17167 / CIP 108236 / LMG 21445 / STM815) (Burkholderia phymatum), this protein is Dual-specificity RNA methyltransferase RlmN.